The primary structure comprises 280 residues: Diaminopimelate epimerase (280 aa).

Substrate-binding residues include Asn15 and Asn66. The Proton donor role is filled by Cys75. Substrate is bound by residues 76–77 (GN), Asn163, Asn196, and 214–215 (ER). Cys223 functions as the Proton acceptor in the catalytic mechanism. Residue 224-225 (GT) coordinates substrate.

The protein belongs to the diaminopimelate epimerase family. In terms of assembly, homodimer.

The protein resides in the cytoplasm. It carries out the reaction (2S,6S)-2,6-diaminopimelate = meso-2,6-diaminopimelate. The protein operates within amino-acid biosynthesis; L-lysine biosynthesis via DAP pathway; DL-2,6-diaminopimelate from LL-2,6-diaminopimelate: step 1/1. Its function is as follows. Catalyzes the stereoinversion of LL-2,6-diaminopimelate (L,L-DAP) to meso-diaminopimelate (meso-DAP), a precursor of L-lysine and an essential component of the bacterial peptidoglycan. The sequence is that of Diaminopimelate epimerase from Phocaeicola vulgatus (strain ATCC 8482 / DSM 1447 / JCM 5826 / CCUG 4940 / NBRC 14291 / NCTC 11154) (Bacteroides vulgatus).